A 368-amino-acid chain; its full sequence is Ethanol acetyltransferase 1 (368 aa).

A mitochondrion-targeting transit peptide spans 1–21 (MFLSLRPSLSVSRLAVVRRAY). One can recognise an AB hydrolase-1 domain in the interval 67–171 (PIIFFHGLLG…IIDNAPEPQP (105 aa)). Active-site charge relay system residues include serine 140, aspartate 164, and histidine 315. The tract at residues 344-368 (RNKDPNNYMQTQNSISNSDTMGQSL) is disordered. The segment covering 348 to 368 (PNNYMQTQNSISNSDTMGQSL) has biased composition (polar residues).

Belongs to the AB hydrolase superfamily.

It is found in the mitochondrion. It catalyses the reaction ethanol + acetyl-CoA = ethyl acetate + CoA. The enzyme catalyses acetyl-CoA + H2O = acetate + CoA + H(+). The catalysed reaction is ethyl acetate + H2O = ethanol + acetate + H(+). Functionally, alcohol acetyltransferase that catalyzes the synthesis of ethyl acetate from ethanol and acetyl-CoA. Can also function as a thioesterase by hydrolyzing acetyl-CoA in the absence of ethanol, as well as esterase hydrolyzing ethyl acetate. The polypeptide is Ethanol acetyltransferase 1 (EAT1) (Kluyveromyces lactis (strain ATCC 8585 / CBS 2359 / DSM 70799 / NBRC 1267 / NRRL Y-1140 / WM37) (Yeast)).